An 80-amino-acid polypeptide reads, in one-letter code: CDC42 small effector protein 1 (80 aa).

2 S-palmitoyl cysteine lipidation sites follow: Cys-10 and Cys-11. One can recognise a CRIB domain in the interval 30–43 (IGEPMNFVHLTHIG). The disordered stretch occupies residues 48–80 (GAGDGLAMTGAVQEQMRSKGNHRDRPWSNSRAL).

Belongs to the CDC42SE/SPEC family. Interacts with CDC42 (in GTP-bound form). Interacts weakly with RAC1 and not at all with RHOA.

The protein localises to the cytoplasm. Its subcellular location is the cytoskeleton. The protein resides in the cell membrane. In terms of biological role, probably involved in the organization of the actin cytoskeleton by acting downstream of CDC42, inducing actin filament assembly. Alters CDC42-induced cell shape changes. In activated T-cells, may play a role in CDC42-mediated F-actin accumulation at the immunological synapse. May play a role in early contractile events in phagocytosis in macrophages. The protein is CDC42 small effector protein 1 (Cdc42se1) of Mus musculus (Mouse).